The primary structure comprises 455 residues: MGSHVIDLVMLRNNFSTAEMRAIWNDEARITKQLAVEAALAQAEGELGLIPKEAAKKIAKVAKETTFDIAAIAEQVAVLKHSLMPTINALQAAAGDEGEFVHYGATTQDIVDTGTVLQLKDAYNIVLRDTQVVFEKLAKLAKHYQNVPMVGRTHGMQALPITFGYKLAIWVDEFGRHLERLHEIKERVFTGNINGAVGSYASFGPKGSEVERQTLAILDLNAPTIGWQSSRDRFSEYASVIGLISATLGKIGNEFYNLMRTEINEIEEPFSKGKIGSSTMPHKRNPAAFEGLASLTPPVLKSVALIHESMHVEHERDAMSWRQEWVALPEMNAYVSAQLAILANVLDGLQVKEAVMARNLEKQHGLLLSEKVMFEVGQKLGKQTAHHLVYECAMTSFEEERPFIDTLFEQAAIADTYARAEVEQWLDPTQYTGLCADKVDEVLAAWQTKGFLKEG.

Residue 106–107 coordinates fumarate; sequence TT. Histidine 154 acts as the Proton donor/acceptor in catalysis. Arginine 233 is a fumarate binding site. Residue serine 277 is the Proton donor/acceptor of the active site. Fumarate-binding positions include serine 278 and 283 to 285; that span reads KRN.

The protein belongs to the lyase 1 family.

It catalyses the reaction N-acetyl-S-(2-succino)-L-cysteine = N-acetyl-L-cysteine + fumarate. It participates in amino-acid biosynthesis; L-cysteine biosynthesis. Its function is as follows. Catalyzes the cleavage of N-acetyl-S-(2-succino)cysteine into fumarate and N-acetylcysteine. Is involved in a S-(2-succino)cysteine (2SC) degradation pathway that allows the bacterium to recover cysteine from 2SC and to detoxify 2SC that may be a toxic metabolite. Can also perform the reverse reaction in vitro, and has minor activity against 2SC and other small molecule thiols. This chain is N-acetyl-S-(2-succino)cysteine lyase, found in Enterococcus italicus (strain DSM 15952 / CCUG 50447 / LMG 22039 / TP 1.5).